A 381-amino-acid polypeptide reads, in one-letter code: Alpha-methylacyl-CoA racemase (381 aa).

Substrate contacts are provided by residues Arg36 and Leu54–Lys57. N6-acetyllysine is present on Lys57. N6-acetyllysine; alternate is present on residues Lys86 and Lys100. N6-succinyllysine; alternate occurs at positions 86 and 100. Residue Lys117 is modified to N6-acetyllysine. Substrate is bound at residue Gly120–Tyr125. The active-site Proton acceptor is His121. The active-site Proton donor is the Asp151. Lys267 is modified (N6-succinyllysine). A disordered region spans residues Thr316 to Ser344. A Microbody targeting signal motif is present at residues Ala379–Leu381.

This sequence belongs to the CoA-transferase III family. In terms of assembly, monomer.

It localises to the peroxisome. The protein localises to the mitochondrion. It catalyses the reaction a (2S)-2-methylacyl-CoA = a (2R)-2-methylacyl-CoA. The enzyme catalyses (25R)-3alpha,7alpha,12alpha-trihydroxy-5beta-cholestan-26-oyl-CoA = (25S)-3alpha,7alpha,12alpha-trihydroxy-5beta-cholestan-26-oyl-CoA. It carries out the reaction (2R,6)-dimethylheptanoyl-CoA = (2S,6)-dimethylheptanoyl-CoA. It functions in the pathway lipid metabolism; bile acid biosynthesis. It participates in lipid metabolism; fatty acid metabolism. Functionally, catalyzes the interconversion of (R)- and (S)-stereoisomers of alpha-methyl-branched-chain fatty acyl-CoA esters. Acts only on coenzyme A thioesters, not on free fatty acids, and accepts as substrates a wide range of alpha-methylacyl-CoAs, including pristanoyl-CoA, trihydroxycoprostanoyl-CoA (an intermediate in bile acid synthesis), and arylpropionic acids like the anti-inflammatory drug ibuprofen (2-(4-isobutylphenyl)propionic acid) but neither 3-methyl-branched nor linear-chain acyl-CoAs. This chain is Alpha-methylacyl-CoA racemase (Amacr), found in Mus musculus (Mouse).